Consider the following 556-residue polypeptide: Glutamine--tRNA ligase (556 aa).

The short motif at 34–44 (PEPNGYLHIGH) is the 'HIGH' region element. ATP-binding positions include 35 to 37 (EPN) and 41 to 47 (HIGHAKS). L-glutamine-binding residues include Asp-67 and Tyr-212. ATP is bound by residues Thr-231, 261–262 (RL), and 269–271 (MSK). The 'KMSKS' region signature appears at 268–272 (VMSKR).

The protein belongs to the class-I aminoacyl-tRNA synthetase family. In terms of assembly, monomer.

The protein localises to the cytoplasm. The catalysed reaction is tRNA(Gln) + L-glutamine + ATP = L-glutaminyl-tRNA(Gln) + AMP + diphosphate. This Vibrio cholerae serotype O1 (strain ATCC 39315 / El Tor Inaba N16961) protein is Glutamine--tRNA ligase.